We begin with the raw amino-acid sequence, 186 residues long: MINRNANRDRDRSRSNDKELKINYRIKAREVRVIFENGIQEVLSIEDAIKKAKEAGLDLVEVSPNVSPPVCKIIDYGKYKFHQEKRQKEQKKNQKVIKLKEVRMQPKIDTHDLDFKSKNILSFLKDGNKVKVTIRFRGRELAHTYLGYDILNSILEKVGEVNYVLESAAKMEGKTMFLIVAPKFKK.

It belongs to the IF-3 family. In terms of assembly, monomer.

Its subcellular location is the cytoplasm. IF-3 binds to the 30S ribosomal subunit and shifts the equilibrium between 70S ribosomes and their 50S and 30S subunits in favor of the free subunits, thus enhancing the availability of 30S subunits on which protein synthesis initiation begins. This Borrelia garinii subsp. bavariensis (strain ATCC BAA-2496 / DSM 23469 / PBi) (Borreliella bavariensis) protein is Translation initiation factor IF-3.